Here is a 1779-residue protein sequence, read N- to C-terminus: 6-methylsalicylic acid synthase (1779 aa).

Polar residues predominate over residues 1–11 (MSASRSSTKFS). Positions 1-40 (MSASRSSTKFSTPAEGSDNGKEFTTPATSTEGHEVPDRPG) are disordered. Positions 31-40 (EGHEVPDRPG) are enriched in basic and acidic residues. The 430-residue stretch at 43-472 (LADVAIIGMA…GTVSHAVLEA (430 aa)) folds into the Ketosynthase family 3 (KS3) domain. Catalysis depends on for beta-ketoacyl synthase activity residues C215, H350, and H392. Residues 586–883 (WIFSGHGAQW…TPTMVRRQPA (298 aa)) are malonyl-CoA:ACP transacylase (MAT) domain. The active-site For acyl/malonyl transferase activity is S672. Positions 942–1218 (THDPAANNLL…SFAGLEGESF (277 aa)) are product template (PT) domain. The N-terminal hotdog fold stretch occupies residues 948-1064 (NNLLGKRIAL…AAVGAANVVP (117 aa)). The PKS/mFAS DH domain occupies 948–1219 (NNLLGKRIAL…FAGLEGESFS (272 aa)). Catalysis depends on H980, which acts as the Proton acceptor; for dehydratase activity. The C-terminal hotdog fold stretch occupies residues 1079–1219 (PQKLADSFSI…FAGLEGESFS (141 aa)). D1138 acts as the Proton donor; for dehydratase activity in catalysis. Residues 1703–1777 (QHLRDVINGC…HLVKHFTKEL (75 aa)) form the Carrier domain. At S1737 the chain carries O-(pantetheine 4'-phosphoryl)serine.

The catalysed reaction is 3 malonyl-CoA + acetyl-CoA + NADPH + 3 H(+) = 6-methylsalicylate + 3 CO2 + NADP(+) + 4 CoA + H2O. It participates in secondary metabolite biosynthesis; terpenoid biosynthesis. Functionally, non-reducing polyketide synthase; part of the gene cluster that mediates the biosynthesis of yanuthone D, a fungal isoprenoid epoxycyclohexenone that acts as an antibiotic against fungi and bacteria. The first step of the pathway is the synthesis of 6-methylsalicylic acid (6-MSA) by the polyketide synthase yanA. 6-MSA is then converted to m-cresol by the decarboxylase yanB. The cytochrome P450 monooxygenase yanC then catalyzes the oxidation of m-cresol to toluquinol. Epoxidation of toluquinol is then performed by the short chain dehydrogenase yanD, with the help of yanE, and a further prenylation by yanG leads to 7-deacetoxyyanuthone A. The next step is the hydroxylation of C-22 of 7-deacetoxyyanuthone A by the cytochrome P450 monooxygenase yanH to yield 22-deacetylyanuthone A. O-Mevalon transferase yanI then attaches mevalon to the hydroxyl group of 22-deacetylyanuthone A to produce yanuthone E. Finally, the FAD-dependent monooxygenase yanF oxidizes the hydroxyl group at C15 of yanuthone E to form yanuthone D. Furthermore, several branching points in the pathway lead to the production of yanuthones F and G from 7-deacetoxyyanuthone A; yanuthones H and I from 22-deacetylyanuthone A; and yanuthone J from yanuthone E. The chain is 6-methylsalicylic acid synthase from Aspergillus niger (strain ATCC 1015 / CBS 113.46 / FGSC A1144 / LSHB Ac4 / NCTC 3858a / NRRL 328 / USDA 3528.7).